The sequence spans 219 residues: Triosephosphate isomerase (219 aa).

6–8 (NYK) is a substrate binding site. Residue H90 is the Electrophile of the active site. The active-site Proton acceptor is the E138. Substrate contacts are provided by residues I143, G178, and 199–200 (AS).

This sequence belongs to the triosephosphate isomerase family. As to quaternary structure, homotetramer; dimer of dimers.

Its subcellular location is the cytoplasm. It catalyses the reaction D-glyceraldehyde 3-phosphate = dihydroxyacetone phosphate. It participates in carbohydrate biosynthesis; gluconeogenesis. It functions in the pathway carbohydrate degradation; glycolysis; D-glyceraldehyde 3-phosphate from glycerone phosphate: step 1/1. Its function is as follows. Involved in the gluconeogenesis. Catalyzes stereospecifically the conversion of dihydroxyacetone phosphate (DHAP) to D-glyceraldehyde-3-phosphate (G3P). The sequence is that of Triosephosphate isomerase from Methanocaldococcus jannaschii (strain ATCC 43067 / DSM 2661 / JAL-1 / JCM 10045 / NBRC 100440) (Methanococcus jannaschii).